The following is a 467-amino-acid chain: Amino-acid permease RocE (467 aa).

12 consecutive transmembrane segments (helical) span residues 21-41, 47-67, 87-107, 122-142, 162-182, 207-227, 246-266, 283-303, 336-356, 361-381, 409-429, and 435-455; these read FMIS…GFTI, LGAV…MLCL, FISP…WAVT, WFPH…MFIL, ILII…LIDL, MLIT…IGVA, VWRT…MIPW, IGIP…LLSV, VPMY…LTKF, TVYM…WITI, YPVL…SLAF, and IALY…HVVI.

This sequence belongs to the amino acid-polyamine-organocation (APC) superfamily. Amino acid transporter (AAT) (TC 2.A.3.1) family.

Its subcellular location is the cell membrane. In terms of biological role, putative transport protein involved in arginine degradative pathway. Probably transports arginine or ornithine. The protein is Amino-acid permease RocE of Bacillus subtilis (strain 168).